The following is a 307-amino-acid chain: tRNA dimethylallyltransferase (307 aa).

9 to 16 (GPTAIGKT) serves as a coordination point for ATP. 11–16 (TAIGKT) provides a ligand contact to substrate. Interaction with substrate tRNA regions lie at residues 34 to 37 (DSRQ) and 164 to 168 (QRMMR).

It belongs to the IPP transferase family. In terms of assembly, monomer. It depends on Mg(2+) as a cofactor.

It catalyses the reaction adenosine(37) in tRNA + dimethylallyl diphosphate = N(6)-dimethylallyladenosine(37) in tRNA + diphosphate. Functionally, catalyzes the transfer of a dimethylallyl group onto the adenine at position 37 in tRNAs that read codons beginning with uridine, leading to the formation of N6-(dimethylallyl)adenosine (i(6)A). The polypeptide is tRNA dimethylallyltransferase (Flavobacterium psychrophilum (strain ATCC 49511 / DSM 21280 / CIP 103535 / JIP02/86)).